The primary structure comprises 160 residues: Cyanate hydratase (160 aa).

Residues Arg-100, Glu-103, and Ser-126 contribute to the active site.

This sequence belongs to the cyanase family.

The enzyme catalyses cyanate + hydrogencarbonate + 3 H(+) = NH4(+) + 2 CO2. Its function is as follows. Catalyzes the reaction of cyanate with bicarbonate to produce ammonia and carbon dioxide. This chain is Cyanate hydratase, found in Aspergillus oryzae (strain ATCC 42149 / RIB 40) (Yellow koji mold).